The chain runs to 727 residues: MTERSGRGGGTRGASALPSPDYYEQVAHLQQGLRNSEKKRLDLERKLYEYHQSDVCRAKLKYIKLKKYLKEICESEKNARIRNQEYLKQFERIQANITASLEKLQELKIEFETQIKKMQLLSKDSLGKKGELKDEDKEKVVMRAEINSGTAMSRGLYQPATIFMGRQMSAVSGIGDFTTERKSPQPTKNFSIPDPHSHQQTAQSSDVTGSRVVQTPGDTQCLNKSDKIDGKTSLQIGEKTPVTASALSEEEQTHCFEIGSNACQSKSNLSEGKKSAELHSPLWERLSPENRTTDLKCDSSRRSEGSEGEILTREHIEVEEERARPPVSPLSGSESCASENECPQEKPPARKASSDHLPCEDSQSQEPFRKKQEEQEEESLSSSSDLTVSVSEDDLILKSPELQTNLGDTMEQEDGTETLNVIHSEQERDAPSTGKPNCILQAPSTPDSPNESFTNLPAKELCNHSDILREGPDAYRTAVLHQLSQLCPRGGSDKEQVRFEQTPASGLLRTRSGQHIAALKGHDTFVQEEEVAKLSGVFLVSKLDQRTKATALLKKDLAEEHDNRLAVHSSKSSCSLPSTPSDESGIRNGKPTLWPKGVTTREQEDESREESTEESMAARMPITETKAYQRLKQSALQGSTHQAGDGFQEATAPTSQPPGLKTGSGTFKTKTTHKIASEASFSSSEGSPLSRHENEGKLTTNLKSKAFWSESDESNSEIEAALRPRTP.

Residues methionine 1–proline 20 form a disordered region. Positions lysine 77 to aspartate 124 form a coiled coil. Disordered stretches follow at residues aspartate 176–aspartate 226, glutamate 271–leucine 456, and arginine 564–proline 727. Residues histidine 198–asparagine 223 are compositionally biased toward polar residues. Residues leucine 286–arginine 324 are compositionally biased toward basic and acidic residues. Residue serine 328 is modified to Phosphoserine. Residues proline 343–cysteine 359 are compositionally biased toward basic and acidic residues. The segment covering leucine 380–valine 390 has biased composition (low complexity). Threonine 387 carries the post-translational modification Phosphothreonine; by PLK1. Polar residues predominate over residues alanine 442–asparagine 455. Low complexity predominate over residues serine 569–glutamate 583. Residues glutamine 603–glutamate 613 show a composition bias toward acidic residues. Over residues leucine 631–glutamine 642 the composition is skewed to polar residues. Composition is skewed to low complexity over residues glycine 659 to threonine 669 and serine 677 to leucine 689. 3 positions are modified to phosphoserine: serine 711, serine 714, and serine 716.

It belongs to the kizuna family. As to quaternary structure, interacts with AKAP9, CEP72, ODF2, PCNT and TUBGCP2. Post-translationally, phosphorylation at Thr-387 by PLK1 is not needed for centrosomal localization or pericentriolar material expansion but is indispensable for spindle-pole stabilization.

It is found in the cytoplasm. It localises to the cytoskeleton. The protein resides in the microtubule organizing center. Its subcellular location is the centrosome. The protein localises to the cilium basal body. Functionally, centrosomal protein required for establishing a robust mitotic centrosome architecture that can endure the forces that converge on the centrosomes during spindle formation. Required for stabilizing the expanded pericentriolar material around the centriole. In Bos taurus (Bovine), this protein is Centrosomal protein kizuna (KIZ).